A 444-amino-acid polypeptide reads, in one-letter code: MSSEIVPIAEPIRPADGGLGAAHASVAVPKGGHWWFRLLAFLGPGYMVSVGYMDPGNWATDLAGGSQFGYLLLSVILLSNLMAIVLQGLSARLGIATGLDLAQACRARYPRGINLALWGLCELAIIACDLAEVIGTAIALKLLFGIPLTLGAIITALDVVLVLLLMNRGFRALEAFVMALLLVIFVCFGIQIALAAPPIAAVLAGFIPRAEVVTNPHALYLAIGIIGATVMPHNLYLHSSIVQTRAYPRTDAGRRSALRWAVTDSTVALMFALFINAAILILAAAVFHAQGRTDVQEIEQAHALLAPMLGVGLASTLFAVALLASGVNSTVTATLAGQIVMEGFLRLRLPPWMRRLLTRGIAIVPVVVVTWLYGEAGTARLLVLSQVVLSMQLPFAVIPLVRFVADRGLMGALVAPAWLVRLAWVIALVIVGLNLKLLWEFALG.

The next 11 membrane-spanning stretches (helical) occupy residues 31-51, 68-88, 115-135, 146-166, 175-195, 212-232, 267-287, 303-323, 356-376, 381-401, and 413-433; these read GGHWWFRLLAFLGPGYMVSVG, FGYLLLSVILLSNLMAIVLQG, LALWGLCELAIIACDLAEVIG, IPLTLGAIITALDVVLVLLLM, AFVMALLLVIFVCFGIQIALA, VVTNPHALYLAIGIIGATVMP, VALMFALFINAAILILAAAVF, ALLAPMLGVGLASTLFAVALL, LLTRGIAIVPVVVVTWLYGEA, LLVLSQVVLSMQLPFAVIPLV, and LVAPAWLVRLAWVIALVIVGL.

It belongs to the NRAMP family.

It localises to the cell inner membrane. In terms of biological role, h(+)-stimulated, divalent metal cation uptake system. This Xanthomonas campestris pv. campestris (strain ATCC 33913 / DSM 3586 / NCPPB 528 / LMG 568 / P 25) protein is Divalent metal cation transporter MntH.